Reading from the N-terminus, the 383-residue chain is Large ribosomal subunit protein uL2m (383 aa).

2 disordered regions span residues 97–122 (FPKK…GGGH) and 322–357 (MNAN…YKTR). Basic residues-rich tracts occupy residues 106 to 122 (GRNH…GGGH) and 330 to 340 (GGGRGKSKGNR).

The protein belongs to the universal ribosomal protein uL2 family. As to quaternary structure, component of the mitochondrial large ribosomal subunit (mt-LSU). Mature N.crassa 74S mitochondrial ribosomes consist of a small (37S) and a large (54S) subunit. The 37S small subunit contains a 16S ribosomal RNA (16S mt-rRNA) and 32 different proteins. The 54S large subunit contains a 23S rRNA (23S mt-rRNA) and 42 different proteins.

The protein resides in the mitochondrion. Its function is as follows. Component of the mitochondrial ribosome (mitoribosome), a dedicated translation machinery responsible for the synthesis of mitochondrial genome-encoded proteins, including at least some of the essential transmembrane subunits of the mitochondrial respiratory chain. The mitoribosomes are attached to the mitochondrial inner membrane and translation products are cotranslationally integrated into the membrane. The protein is Large ribosomal subunit protein uL2m (rml2) of Neurospora crassa (strain ATCC 24698 / 74-OR23-1A / CBS 708.71 / DSM 1257 / FGSC 987).